A 351-amino-acid polypeptide reads, in one-letter code: Glycerol-1-phosphate dehydrogenase [NAD(P)+] (351 aa).

Residues 98–102 (GSIID) and 120–123 (TTAS) each bind NAD(+). Position 125 (D125) interacts with substrate. Residue S129 coordinates NAD(+). D172 provides a ligand contact to substrate. Positions 172 and 252 each coordinate Zn(2+). A substrate-binding site is contributed by H256. Residue H268 coordinates Zn(2+).

The protein belongs to the glycerol-1-phosphate dehydrogenase family. Requires Zn(2+) as cofactor.

The protein resides in the cytoplasm. The catalysed reaction is sn-glycerol 1-phosphate + NAD(+) = dihydroxyacetone phosphate + NADH + H(+). It catalyses the reaction sn-glycerol 1-phosphate + NADP(+) = dihydroxyacetone phosphate + NADPH + H(+). The protein operates within membrane lipid metabolism; glycerophospholipid metabolism. Catalyzes the NAD(P)H-dependent reduction of dihydroxyacetonephosphate (DHAP or glycerone phosphate) to glycerol 1-phosphate (G1P). The G1P thus generated is used as the glycerophosphate backbone of phospholipids in the cellular membranes of Archaea. This chain is Glycerol-1-phosphate dehydrogenase [NAD(P)+], found in Thermococcus kodakarensis (strain ATCC BAA-918 / JCM 12380 / KOD1) (Pyrococcus kodakaraensis (strain KOD1)).